Consider the following 305-residue polypeptide: Ribosomal RNA small subunit methyltransferase H (305 aa).

S-adenosyl-L-methionine is bound by residues 46-48 (GGH), Asp65, Phe92, Asp108, and His115.

Belongs to the methyltransferase superfamily. RsmH family.

The protein localises to the cytoplasm. It carries out the reaction cytidine(1402) in 16S rRNA + S-adenosyl-L-methionine = N(4)-methylcytidine(1402) in 16S rRNA + S-adenosyl-L-homocysteine + H(+). Functionally, specifically methylates the N4 position of cytidine in position 1402 (C1402) of 16S rRNA. The sequence is that of Ribosomal RNA small subunit methyltransferase H from Trichormus variabilis (strain ATCC 29413 / PCC 7937) (Anabaena variabilis).